The chain runs to 312 residues: Beta-ketoacyl-[acyl-carrier-protein] synthase III (312 aa).

Residues Cys112 and His237 contribute to the active site. Residues 238-242 (QANIR) form an ACP-binding region. Asn267 is a catalytic residue.

It belongs to the thiolase-like superfamily. FabH family. In terms of assembly, homodimer.

It is found in the cytoplasm. It carries out the reaction malonyl-[ACP] + acetyl-CoA + H(+) = 3-oxobutanoyl-[ACP] + CO2 + CoA. The protein operates within lipid metabolism; fatty acid biosynthesis. Catalyzes the condensation reaction of fatty acid synthesis by the addition to an acyl acceptor of two carbons from malonyl-ACP. Catalyzes the first condensation reaction which initiates fatty acid synthesis and may therefore play a role in governing the total rate of fatty acid production. Possesses both acetoacetyl-ACP synthase and acetyl transacylase activities. Its substrate specificity determines the biosynthesis of branched-chain and/or straight-chain of fatty acids. This Listeria welshimeri serovar 6b (strain ATCC 35897 / DSM 20650 / CCUG 15529 / CIP 8149 / NCTC 11857 / SLCC 5334 / V8) protein is Beta-ketoacyl-[acyl-carrier-protein] synthase III.